The chain runs to 186 residues: Elongation factor P (186 aa).

Belongs to the elongation factor P family.

Its subcellular location is the cytoplasm. Its pathway is protein biosynthesis; polypeptide chain elongation. Functionally, involved in peptide bond synthesis. Stimulates efficient translation and peptide-bond synthesis on native or reconstituted 70S ribosomes in vitro. Probably functions indirectly by altering the affinity of the ribosome for aminoacyl-tRNA, thus increasing their reactivity as acceptors for peptidyl transferase. In Neisseria gonorrhoeae (strain ATCC 700825 / FA 1090), this protein is Elongation factor P.